Here is a 398-residue protein sequence, read N- to C-terminus: Lysophosphatidylserine lipase ABHD12 (398 aa).

The span at 1-15 shows a compositional bias: basic and acidic residues; sequence MRKRTEPVTLEHERC. The tract at residues 1 to 24 is disordered; sequence MRKRTEPVTLEHERCAASGSSSSG. Residues 1–74 are Cytoplasmic-facing; that stretch reads MRKRTEPVTL…RKSLWFRLRK (74 aa). Residues 75–95 traverse the membrane as a helical segment; it reads ILLCVLGFYIAIPFLVKLCPG. The Extracellular segment spans residues 96 to 398; that stretch reads IQAKLIFLNF…LGKSEPERQH (303 aa). Asparagine 123 carries N-linked (GlcNAc...) asparagine glycosylation. The active-site Nucleophile is the serine 246. Catalysis depends on charge relay system residues aspartate 333 and histidine 372.

The protein belongs to the serine esterase family. In terms of processing, glycosylated.

It is found in the endoplasmic reticulum membrane. It localises to the mitochondrion. It carries out the reaction 1-(9Z-octadecenoyl)-sn-glycero-3-phospho-L-serine + H2O = sn-glycero-3-phospho-L-serine + (9Z)-octadecenoate + H(+). It catalyses the reaction 1-(9Z-octadecenoyl)-sn-glycero-3-phospho-(1'-sn-glycerol) + H2O = sn-glycero-3-phospho-(1'-sn-glycerol) + (9Z)-octadecenoate + H(+). The catalysed reaction is 1-(9Z-octadecenoyl)-sn-glycero-3-phospho-(1D-myo-inositol) + H2O = sn-glycero-3-phospho-1D-myo-inositol + (9Z)-octadecenoate + H(+). The enzyme catalyses 1-(9Z-octadecenoyl)-sn-glycero-3-phosphoethanolamine + H2O = sn-glycero-3-phosphoethanolamine + (9Z)-octadecenoate + H(+). It carries out the reaction 1-(9Z-octadecenoyl)-sn-glycero-3-phosphocholine + H2O = 1-(9Z-octadecenoyl)-sn-glycerol + phosphocholine + H(+). It catalyses the reaction 2-(9Z-octadecenoyl)-glycerol + H2O = glycerol + (9Z)-octadecenoate + H(+). The catalysed reaction is 1-hexadecanoyl-sn-glycero-3-phospho-L-serine + H2O = sn-glycero-3-phospho-L-serine + hexadecanoate + H(+). The enzyme catalyses 2-(5Z,8Z,11Z,14Z-eicosatetraenoyl)-glycerol + H2O = glycerol + (5Z,8Z,11Z,14Z)-eicosatetraenoate + H(+). It carries out the reaction Hydrolyzes glycerol monoesters of long-chain fatty acids.. It catalyses the reaction 1-decanoylglycerol + H2O = decanoate + glycerol + H(+). The catalysed reaction is 1-dodecanoylglycerol + H2O = dodecanoate + glycerol + H(+). The enzyme catalyses 1-tetradecanoylglycerol + H2O = tetradecanoate + glycerol + H(+). It carries out the reaction 2-hexadecanoylglycerol + H2O = glycerol + hexadecanoate + H(+). It catalyses the reaction 1-(9Z-octadecenoyl)-glycerol + H2O = glycerol + (9Z)-octadecenoate + H(+). The catalysed reaction is 2-(9Z,12Z-octadecadienoyl)-glycerol + H2O = (9Z,12Z)-octadecadienoate + glycerol + H(+). The enzyme catalyses 1-(5Z,8Z,11Z,14Z-eicosatetraenoyl)-glycerol + H2O = glycerol + (5Z,8Z,11Z,14Z)-eicosatetraenoate + H(+). It carries out the reaction 1-(9Z,12Z-octadecadienoyl)-glycerol + H2O = (9Z,12Z)-octadecadienoate + glycerol + H(+). It catalyses the reaction 1-hexadecanoylglycerol + H2O = glycerol + hexadecanoate + H(+). The catalysed reaction is 1-octadecanoylglycerol + H2O = octadecanoate + glycerol + H(+). The enzyme catalyses 1-octadecanoyl-2-(9,10-epoxyoctadecanoyl)-sn-glycero-3-phospho-L-serine + H2O = 9,10-epoxyoctadecanoate + 1-octadecanoyl-sn-glycero-3-phosphoserine + H(+). It carries out the reaction 1-octadecanoyl-2-(10-hydroxyoctadecanoyl)-sn-glycero-3-phospho-L-serine + H2O = 1-octadecanoyl-sn-glycero-3-phosphoserine + 10-hydroxyoctadecanoate + H(+). It catalyses the reaction 1-hexadecanoyl-2-(10-hydroxyoctadecanoyl)-sn-glycero-3-phospho-L-serine + H2O = 10-hydroxyoctadecanoate + 1-hexadecanoyl-sn-glycero-3-phospho-L-serine + H(+). Selectively inhibited by DO264 (N-3-pyridyl-N'-(1-[3-chloro-4-{2-chloro-4-(trifluoromethoxy)phenoxy}pyridine-2-yl]piperidin-4-yl)thiourea). In terms of biological role, lysophosphatidylserine (LPS) lipase that mediates the hydrolysis of lysophosphatidylserine, a class of signaling lipids that regulates immunological and neurological processes. Represents a major lysophosphatidylserine lipase in the brain, thereby playing a key role in the central nervous system. Also able to hydrolyze oxidized phosphatidylserine; oxidized phosphatidylserine is produced in response to severe inflammatory stress and constitutes a proapoptotic 'eat me' signal. Also has monoacylglycerol (MAG) lipase activity: hydrolyzes 2-arachidonoylglycerol (2-AG), thereby acting as a regulator of endocannabinoid signaling pathways. Has a strong preference for very-long-chain lipid substrates; substrate specificity is likely due to improved catalysis and not improved substrate binding. The chain is Lysophosphatidylserine lipase ABHD12 from Mus musculus (Mouse).